Reading from the N-terminus, the 89-residue chain is Cell division topological specificity factor (89 aa).

The protein belongs to the MinE family.

Its function is as follows. Prevents the cell division inhibition by proteins MinC and MinD at internal division sites while permitting inhibition at polar sites. This ensures cell division at the proper site by restricting the formation of a division septum at the midpoint of the long axis of the cell. The polypeptide is Cell division topological specificity factor (Serratia proteamaculans (strain 568)).